The chain runs to 458 residues: Plant UBX domain-containing protein 2 (458 aa).

The interval 1-103 is disordered; that stretch reads MDDVKDKLKG…APQDGFDPYG (103 aa). Positions 44–54 are enriched in polar residues; it reads PIQNRFNSSQA. Residues 56 to 70 are compositionally biased toward pro residues; sequence NPTPRPKPNPNPLPE. A compositionally biased stretch (polar residues) spans 74-85; the sequence is SSSDQKISGSTR. A C2H2-type; atypical zinc finger spans residues 121–143; sequence FECPICKNPFTSEEEVSVHVESC. Positions 181–248 constitute a PUB domain; the sequence is SSIDVLLRLF…EIWAVMDVPS (68 aa). One can recognise a UBX domain in the interval 349–433; the sequence is KRYKRSMIRV…ELVPSALIRF (85 aa).

As to quaternary structure, interacts with CDC48A in vitro and co-fractionates with membrane-associated but not soluble CDC48A in vivo.

The protein localises to the membrane. Functionally, facilitates the interaction of SYP31 and CDC48A, thereby regulating an CDC48A membrane-associated function. Appears to act as a negative regulator mediating the powdery mildew-plant interaction. The polypeptide is Plant UBX domain-containing protein 2 (Arabidopsis thaliana (Mouse-ear cress)).